Reading from the N-terminus, the 77-residue chain is MLAKTGDVVVQKVPVIRLSVFLHFFFVFPFCLLHRLYMGMKQVQEFIMEPKGSVFVVRATLRVSLENAGKIFFNETE.

The helical transmembrane segment at 13-33 threads the bilayer; sequence VPVIRLSVFLHFFFVFPFCLL.

It localises to the membrane. This is an uncharacterized protein from Saccharomyces cerevisiae (strain ATCC 204508 / S288c) (Baker's yeast).